The primary structure comprises 440 residues: Dihydrolipoyllysine-residue acetyltransferase component of pyruvate dehydrogenase complex (440 aa).

One can recognise a Lipoyl-binding domain in the interval 2-78 (SIEVKMPALS…AVGQVIAVMA (77 aa)). An N6-lipoyllysine modification is found at K43. The tract at residues 91 to 113 (ASSQISEPSEKADVAQKETADSE) is disordered. Residues 98 to 110 (PSEKADVAQKETA) are compositionally biased toward basic and acidic residues. Positions 149–186 (KASPLAKRLAKKNHVDLKQVNGSGPHGRIIKADIEAFI) constitute a Peripheral subunit-binding (PSBD) domain. Positions 192–202 (ASSNPSVSTPE) are enriched in polar residues. The segment at 192-214 (ASSNPSVSTPEASGKITHDTPHN) is disordered. The active site involves H412.

This sequence belongs to the 2-oxoacid dehydrogenase family. Forms a 24-polypeptide structural core with octahedral symmetry. Requires (R)-lipoate as cofactor.

It carries out the reaction N(6)-[(R)-dihydrolipoyl]-L-lysyl-[protein] + acetyl-CoA = N(6)-[(R)-S(8)-acetyldihydrolipoyl]-L-lysyl-[protein] + CoA. Functionally, the pyruvate dehydrogenase complex catalyzes the overall conversion of pyruvate to acetyl-CoA and CO(2). It contains multiple copies of three enzymatic components: pyruvate dehydrogenase (E1), dihydrolipoamide acetyltransferase (E2) and lipoamide dehydrogenase (E3). The sequence is that of Dihydrolipoyllysine-residue acetyltransferase component of pyruvate dehydrogenase complex (pdhC) from Zymomonas mobilis subsp. mobilis (strain ATCC 31821 / ZM4 / CP4).